We begin with the raw amino-acid sequence, 390 residues long: Galactokinase (390 aa).

33–36 (EHTD) serves as a coordination point for substrate. Residues Ser-67 and 124–130 (GAGLSSS) contribute to the ATP site. Residues Ser-130 and Glu-162 each contribute to the Mg(2+) site. The active-site Proton acceptor is the Asp-174. Residue Tyr-224 participates in substrate binding.

Belongs to the GHMP kinase family. GalK subfamily.

The protein localises to the cytoplasm. It carries out the reaction alpha-D-galactose + ATP = alpha-D-galactose 1-phosphate + ADP + H(+). The protein operates within carbohydrate metabolism; galactose metabolism. Catalyzes the transfer of the gamma-phosphate of ATP to D-galactose to form alpha-D-galactose-1-phosphate (Gal-1-P). This Exiguobacterium sibiricum (strain DSM 17290 / CCUG 55495 / CIP 109462 / JCM 13490 / 255-15) protein is Galactokinase.